Here is a 464-residue protein sequence, read N- to C-terminus: Siroheme synthase (464 aa).

A precorrin-2 dehydrogenase /sirohydrochlorin ferrochelatase region spans residues Met1–Leu203. Residues Glu22 to Ile23 and Pro43 to Glu44 each bind NAD(+). Ser128 carries the phosphoserine modification. Residues Gly216–Leu464 are uroporphyrinogen-III C-methyltransferase. Pro225 contributes to the S-adenosyl-L-methionine binding site. Asp248 functions as the Proton acceptor in the catalytic mechanism. Residue Lys270 is the Proton donor of the active site. Residues Gly301–Asp303, Ile306, Thr331–Ala332, Met383, and Gly412 each bind S-adenosyl-L-methionine.

This sequence in the N-terminal section; belongs to the precorrin-2 dehydrogenase / sirohydrochlorin ferrochelatase family. The protein in the C-terminal section; belongs to the precorrin methyltransferase family.

The enzyme catalyses uroporphyrinogen III + 2 S-adenosyl-L-methionine = precorrin-2 + 2 S-adenosyl-L-homocysteine + H(+). It catalyses the reaction precorrin-2 + NAD(+) = sirohydrochlorin + NADH + 2 H(+). It carries out the reaction siroheme + 2 H(+) = sirohydrochlorin + Fe(2+). Its pathway is cofactor biosynthesis; adenosylcobalamin biosynthesis; precorrin-2 from uroporphyrinogen III: step 1/1. It functions in the pathway cofactor biosynthesis; adenosylcobalamin biosynthesis; sirohydrochlorin from precorrin-2: step 1/1. It participates in porphyrin-containing compound metabolism; siroheme biosynthesis; precorrin-2 from uroporphyrinogen III: step 1/1. The protein operates within porphyrin-containing compound metabolism; siroheme biosynthesis; siroheme from sirohydrochlorin: step 1/1. Its pathway is porphyrin-containing compound metabolism; siroheme biosynthesis; sirohydrochlorin from precorrin-2: step 1/1. In terms of biological role, multifunctional enzyme that catalyzes the SAM-dependent methylations of uroporphyrinogen III at position C-2 and C-7 to form precorrin-2 via precorrin-1. Then it catalyzes the NAD-dependent ring dehydrogenation of precorrin-2 to yield sirohydrochlorin. Finally, it catalyzes the ferrochelation of sirohydrochlorin to yield siroheme. The polypeptide is Siroheme synthase (Pseudomonas syringae pv. syringae (strain B728a)).